The sequence spans 250 residues: 5'-nucleotidase SurE (250 aa).

4 residues coordinate a divalent metal cation: Asp-8, Asp-9, Ser-40, and Asn-94.

It belongs to the SurE nucleotidase family. A divalent metal cation is required as a cofactor.

It is found in the cytoplasm. It carries out the reaction a ribonucleoside 5'-phosphate + H2O = a ribonucleoside + phosphate. Its function is as follows. Nucleotidase that shows phosphatase activity on nucleoside 5'-monophosphates. This is 5'-nucleotidase SurE from Wolbachia pipientis wMel.